Consider the following 212-residue polypeptide: Probable GTP-binding protein EngB (212 aa).

The EngB-type G domain maps to 38–210; sequence ALPQIAFVGK…KTSLAKCIKL (173 aa). GTP-binding positions include 46–53, 73–77, 91–94, 158–161, and 189–191; these read GKSNVGKS, GRTRQ, DLPG, TKSD, and VSS. Ser53 and Thr75 together coordinate Mg(2+).

Belongs to the TRAFAC class TrmE-Era-EngA-EngB-Septin-like GTPase superfamily. EngB GTPase family. Mg(2+) is required as a cofactor.

In terms of biological role, necessary for normal cell division and for the maintenance of normal septation. This is Probable GTP-binding protein EngB from Rickettsia bellii (strain OSU 85-389).